The primary structure comprises 2151 residues: Calpain-type cysteine protease DEK1 (2151 aa).

Residues 1 to 32 (MEGDERGVLLACVISGTLFTVFGSGSFWILWA) form the signal peptide. Residues 33–69 (VNWRPWRLYSWIFARKWPKVLQGPQLDILCGVLSLFA) are Extracellular-facing. Residues 70–90 (WIVVVSPIAILIGWGSWLIVI) form a helical membrane-spanning segment. The Cytoplasmic portion of the chain corresponds to 91 to 94 (LDRH). Residues 95–115 (IIGLAIIMAGTALLLAFYSIM) traverse the membrane as a helical segment. Residues 116–126 (LWWRTQWQSSR) are Extracellular-facing. Residues 127-147 (AVALLLLLGVALLCAYELCAV) form a helical membrane-spanning segment. Residues 148-163 (YVTAGAHASQQYSPSG) lie on the Cytoplasmic side of the membrane. Residues 164-184 (FFFGVSAIALAINMLFICRMV) traverse the membrane as a helical segment. The Extracellular segment spans residues 185 to 235 (FNGNGLDVDEYVRRAYKFAYSDCIEVGPVACLPEPPDPNELYPRQTSRASH). Residues 236-256 (LGLLYLGSLVVLLAYSVLYGL) form a helical membrane-spanning segment. Residues 257 to 263 (TARESRW) lie on the Cytoplasmic side of the membrane. Residues 264-284 (LGGITSAAVIVLDWNIGACLY) form a helical membrane-spanning segment. Over 285-293 (GFKLLQNRV) the chain is Extracellular. Residues 294-314 (LALFVAGISRLFLICFGIHYW) form a helical membrane-spanning segment. The Cytoplasmic portion of the chain corresponds to 315–319 (YLGHC). Residues 320–340 (ISYIFVASVLSGAAVSRHLSI) traverse the membrane as a helical segment. Residues 341 to 615 (TDPSAARRDA…LLLHHVAGTP (275 aa)) lie on the Extracellular side of the membrane. Disordered regions lie at residues 363 to 393 (RRKE…GHTG) and 405 to 442 (CTAD…SCRS). Positions 369 to 388 (SSSSSSDGCGSSIKRSSSID) are enriched in low complexity. Polar residues predominate over residues 405-420 (CTADNLTRTGSSQEGI). The segment covering 430–442 (RPSLGLRSSSCRS) has biased composition (low complexity). A helical membrane pass occupies residues 616-636 (ERAWGLFSLVFILETIIVAIF). The Cytoplasmic segment spans residues 637 to 652 (RPKTITIINSSHQQFE). The helical transmembrane segment at 653–673 (FGFSVLLLSPVVCSIMAFLRS) threads the bilayer. The Extracellular portion of the chain corresponds to 674–686 (LQVEEMALTSKSR). Residues 687–707 (KYGFVAWLLSTSVGLSLSFLS) form a helical membrane-spanning segment. Topologically, residues 708 to 711 (KSSV) are cytoplasmic. Residues 712–732 (LLGISLTVPLMAACLSIAVPI) form a helical membrane-spanning segment. Topologically, residues 733-760 (WMHNGYQFWVPQLSCGDQARDLRSPRIK) are extracellular. Residues 761 to 782 (GFILWICVVLFAGSVISLGAII) traverse the membrane as a helical segment. Topologically, residues 783–813 (SAKPLDDLKYKLFSARENNVTSPYTSSVYLG) are cytoplasmic. The chain crosses the membrane as a helical span at residues 814 to 834 (WAMSSGIALVVTAILPIVSWF). The Extracellular segment spans residues 835–844 (ATYRFSHSSA). Residues 845–865 (VCLMIFSVVLVAFCGTSYLEV) traverse the membrane as a helical segment. Residues 866-878 (VKSRDDQLPTKGD) are Cytoplasmic-facing. Residues 879–899 (FLAALLPLACIPALLSLCCGM) traverse the membrane as a helical segment. The Extracellular segment spans residues 900 to 912 (VKWKDDCWILSRG). A helical membrane pass occupies residues 913 to 933 (VYVFFSIGLLLLFGAIAAVIA). Residues 934–936 (VKP) lie on the Cytoplasmic side of the membrane. The chain crosses the membrane as a helical span at residues 937-957 (WTIGVSFLLVLFLMVVTIGVI). Over 958–971 (HLWASNNFYLTRKQ) the chain is Extracellular. A helical membrane pass occupies residues 972-992 (TSFVCFLALLLGLAAFLLGWH). The Cytoplasmic portion of the chain corresponds to 993–1006 (QDKAFAGASVGYFT). A helical membrane pass occupies residues 1007–1027 (FLSLLAGRALAVLLSPPIVVY). Residues 1028–1050 (SPRVLPVYVYDAHADCGKNVSAA) lie on the Extracellular side of the membrane. A helical membrane pass occupies residues 1051 to 1071 (FLVLYGIALATEGWGVVASLI). Residues 1072-2151 (IYPPFAGAAV…TKASIVLEAL (1080 aa)) lie on the Cytoplasmic side of the membrane. Calpain catalytic domains follow at residues 1407-1600 (SGKH…DMID) and 1695-1997 (QFTD…CRVY). Residues Cys-1761, His-1919, and Asn-1939 contribute to the active site.

The protein belongs to the peptidase C2 family. In terms of processing, autocatalytic proteolytic cleavage leading to the production of mainly cytoplasmic localized subproducts of about 85 and 120 kDa. In terms of tissue distribution, mostly expressed in meristems and organ primordia. Expressed at low levels in young and germinating seeds at 10 ppm and in seedling roots at 67 ppm. Present in most tissues at a low level.

It is found in the cell membrane. The protein resides in the endosome membrane. The protein localises to the endoplasmic reticulum membrane. It localises to the cytoplasm. Its function is as follows. Essential protease involved in epiderm development. Required for aleurone cell development in the endosperm probably by maintaining and restricting the aleurone and embryonic epidermal L1 cell-layer fates as well as meristems organization. Involved in the maintenance of adaxial/abaxial axis information in developing leaves, probably by regulating cell proliferation and expansion. Does not need calcium ions to be active. Required for the formation of giant cells in sepals by determining cell fate and promoting endoreplication. The polypeptide is Calpain-type cysteine protease DEK1 (Arabidopsis thaliana (Mouse-ear cress)).